The sequence spans 330 residues: Beta-ketoacyl-[acyl-carrier-protein] synthase III (330 aa).

Active-site residues include Cys115 and His255. The segment at 256-260 (QANFR) is ACP-binding. The active site involves Asn285.

It belongs to the thiolase-like superfamily. FabH family. In terms of assembly, homodimer.

It localises to the cytoplasm. The catalysed reaction is malonyl-[ACP] + acetyl-CoA + H(+) = 3-oxobutanoyl-[ACP] + CO2 + CoA. Its pathway is lipid metabolism; fatty acid biosynthesis. In terms of biological role, catalyzes the condensation reaction of fatty acid synthesis by the addition to an acyl acceptor of two carbons from malonyl-ACP. Catalyzes the first condensation reaction which initiates fatty acid synthesis and may therefore play a role in governing the total rate of fatty acid production. Possesses both acetoacetyl-ACP synthase and acetyl transacylase activities. Its substrate specificity determines the biosynthesis of branched-chain and/or straight-chain of fatty acids. This Helicobacter pylori (strain HPAG1) protein is Beta-ketoacyl-[acyl-carrier-protein] synthase III.